The sequence spans 312 residues: Aquaglyceroporin-2 (312 aa).

Helical transmembrane passes span 78–98 (FLGN…SLLV), 104–124 (LGLT…SLGI), 151–171 (YIAA…GVFA), 203–223 (GIFY…LCVC), 239–259 (VAIG…SPLA), and 286–306 (YYFW…LFLY).

It belongs to the MIP/aquaporin (TC 1.A.8) family.

Its subcellular location is the membrane. The catalysed reaction is glycerol(in) = glycerol(out). It catalyses the reaction H2O(in) = H2O(out). The enzyme catalyses urea(in) = urea(out). Mediates water and glycerol transport across cell membranes. Permeable to urea. Permeable to methylamine/methylammonium. Permeable to dihydroxyacetone. This chain is Aquaglyceroporin-2, found in Trypanosoma brucei brucei.